Reading from the N-terminus, the 71-residue chain is Ubiquinol-cytochrome c reductase complex assembly factor 6 (71 aa).

Residues 1-8 lie on the Mitochondrial matrix side of the membrane; sequence MPAGVPMS. Residues 9-25 form a helical; Signal-anchor for type II membrane protein membrane-spanning segment; it reads TYLKMLAASLLAMCAGA. Residues 26–71 lie on the Mitochondrial intermembrane side of the membrane; sequence EVVHRYYRPDLTIPEIPPKRGELKTELLGLKERKHKPQISQQEELK. A disordered region spans residues 52–71; sequence LLGLKERKHKPQISQQEELK.

This sequence belongs to the UQCC6 family. In terms of assembly, interacts with UQCRC1. Interacts with UQCRQ. Interacts with UQCC5. Forms a complex, named COMB/coordinator of mitochondrial CYTB biogenesis, composed of UQCC1, UQCC2, UQCC4, UQCC5 and UQCC6; stabilizes nascent cytochrome b/MT-CYB and promotes its membrane insertion. Forms a complex, named COMA, composed of UQCC1, UQCC2 and UQCC4; activates MT-CYB translation. Forms a complex, named COMC, composed of UQCC1, UQCC2; UQCC3 and UQCC4; mediates MT-CYB hemylation and association with the first nuclear-encoded complex III subunit UQCRQ. Interacts with MT-CYB.

Its subcellular location is the mitochondrion inner membrane. Required for the assembly and stability of the mitochondrial ubiquinol-cytochrome c reductase complex (complex III (CIII) or cytochrome b-c1 complex), a multisubunit transmembrane complex that is part of the mitochondrial electron transport chain (ETC) which drives oxidative phosphorylation. Mediates early complex III biogenesis. Participates in regulating the levels of electron transport chain proteins, and therefore energy supply, in response to changes in energy demand. Also required for cytochrome c oxidase complex (complex IV) assembly. This chain is Ubiquinol-cytochrome c reductase complex assembly factor 6, found in Pongo abelii (Sumatran orangutan).